We begin with the raw amino-acid sequence, 426 residues long: Diaminobutyrate--2-oxoglutarate transaminase (426 aa).

Lysine 274 bears the N6-(pyridoxal phosphate)lysine mark.

It belongs to the class-III pyridoxal-phosphate-dependent aminotransferase family. The cofactor is pyridoxal 5'-phosphate.

It carries out the reaction L-2,4-diaminobutanoate + 2-oxoglutarate = L-aspartate 4-semialdehyde + L-glutamate. The protein operates within amine and polyamine biosynthesis; ectoine biosynthesis; L-ectoine from L-aspartate 4-semialdehyde: step 1/3. Its function is as follows. Catalyzes reversively the conversion of L-aspartate beta-semialdehyde (ASA) to L-2,4-diaminobutyrate (DABA) by transamination with L-glutamate. This is Diaminobutyrate--2-oxoglutarate transaminase (ectB) from Oceanobacillus iheyensis (strain DSM 14371 / CIP 107618 / JCM 11309 / KCTC 3954 / HTE831).